The primary structure comprises 96 residues: Putative septation protein SpoVG (96 aa).

It belongs to the SpoVG family.

Its function is as follows. Essential for sporulation. Interferes with or is a negative regulator of the pathway leading to asymmetric septation. In Priestia megaterium (Bacillus megaterium), this protein is Putative septation protein SpoVG.